The following is a 193-amino-acid chain: Ion-translocating oxidoreductase complex subunit A (193 aa).

Transmembrane regions (helical) follow at residues 5 to 25, 39 to 59, 63 to 83, 102 to 122, 134 to 154, and 171 to 191; these read LLLL…FLGL, IGMG…SYLM, ILIP…VIAV, LLGI…VALL, IIYG…FAAM, and SIAM…TGLI.

Belongs to the NqrDE/RnfAE family. The complex is composed of six subunits: RnfA, RnfB, RnfC, RnfD, RnfE and RnfG.

It is found in the cell inner membrane. Its function is as follows. Part of a membrane-bound complex that couples electron transfer with translocation of ions across the membrane. The sequence is that of Ion-translocating oxidoreductase complex subunit A from Aeromonas hydrophila subsp. hydrophila (strain ATCC 7966 / DSM 30187 / BCRC 13018 / CCUG 14551 / JCM 1027 / KCTC 2358 / NCIMB 9240 / NCTC 8049).